The sequence spans 319 residues: Probable enoyl-CoA hydratase alpha subunit (319 aa).

The segment at 199-298 (FEAAKQRRLV…EIGMPVVLDW (100 aa)) is DUF35.

Belongs to the thioester dehydratase family. In terms of assembly, heterodimer composed of ChsH1 and ChsH2. Two heterodimers combine to form a heterotetramer. The complex interacts with Ltp2 via the DUF35 C-terminal region of ChsH2.

Probably involved in bile acid degradation. The sequence is that of Probable enoyl-CoA hydratase alpha subunit from Thermomonospora curvata (strain ATCC 19995 / DSM 43183 / JCM 3096 / KCTC 9072 / NBRC 15933 / NCIMB 10081 / Henssen B9).